The sequence spans 80 residues: Conotoxin SmIVA (80 aa).

A signal peptide spans Met-1 to Ser-21. A propeptide spanning residues Ile-22–Arg-38 is cleaved from the precursor. Gln-39 is subject to Pyrrolidone carboxylic acid. Residue Ser-45 is glycosylated (O-linked (HexNAc...) serine). 4 positions are modified to 4-hydroxyproline: Pro-55, Pro-60, Pro-70, and Pro-72. Ser-75 is subject to Serine amide. Residues Gly-76–Asp-80 constitute a propeptide that is removed on maturation.

This sequence belongs to the conotoxin A superfamily. In terms of processing, contains 3 disulfide bonds. In terms of tissue distribution, expressed by the venom duct.

The protein localises to the secreted. Its function is as follows. Neurotoxin with probable activity on sodium channel. Induces intense repetitive firing of the frog neuromuscular junction, leading to a tetanic contracture in muscle fiber (spastic paralysis). In vivo, shows the same effect as the whole venom when injected on fish prey. The polypeptide is Conotoxin SmIVA (Conus stercusmuscarum (Fly-specked cone)).